Here is a 204-residue protein sequence, read N- to C-terminus: Inner membrane protein YagU (204 aa).

The Periplasmic portion of the chain corresponds to methionine 1–tyrosine 14. A helical transmembrane segment spans residues glycine 15–alanine 35. Residues glutamate 36–asparagine 100 lie on the Cytoplasmic side of the membrane. Residues tryptophan 101–alanine 121 form a helical membrane-spanning segment. Residues glutamate 122–glycine 132 are Periplasmic-facing. A helical membrane pass occupies residues leucine 133–leucine 153. Residues threonine 154–arginine 204 lie on the Cytoplasmic side of the membrane.

In terms of assembly, homodimer.

The protein resides in the cell inner membrane. This is Inner membrane protein YagU (yagU) from Escherichia coli (strain K12).